The chain runs to 201 residues: Holliday junction resolvase RecU (201 aa).

Mg(2+) is bound by residues Thr-87, Asp-89, Glu-102, and Gln-121.

This sequence belongs to the RecU family. Mg(2+) serves as cofactor.

Its subcellular location is the cytoplasm. It catalyses the reaction Endonucleolytic cleavage at a junction such as a reciprocal single-stranded crossover between two homologous DNA duplexes (Holliday junction).. Its function is as follows. Endonuclease that resolves Holliday junction intermediates in genetic recombination. Cleaves mobile four-strand junctions by introducing symmetrical nicks in paired strands. Promotes annealing of linear ssDNA with homologous dsDNA. Required for DNA repair, homologous recombination and chromosome segregation. This Listeria welshimeri serovar 6b (strain ATCC 35897 / DSM 20650 / CCUG 15529 / CIP 8149 / NCTC 11857 / SLCC 5334 / V8) protein is Holliday junction resolvase RecU.